The sequence spans 756 residues: Ent-kaur-16-ene synthase, chloroplastic (756 aa).

Aspartate 496, aspartate 500, asparagine 639, and glutamate 647 together coordinate Mg(2+). The short motif at 496–500 is the DDXXD motif element; sequence DDFFD.

Belongs to the terpene synthase family. It depends on Mg(2+) as a cofactor. As to expression, highly expressed in panicles and at lower levels in leaves and stems.

It localises to the plastid. Its subcellular location is the chloroplast. The catalysed reaction is ent-copalyl diphosphate = ent-kaur-16-ene + diphosphate. It functions in the pathway plant hormone biosynthesis; gibberellin biosynthesis. In terms of biological role, catalyzes the conversion of ent-copalyl diphosphate to the gibberellin precursor ent-kaur-16-ene. In Oryza sativa subsp. japonica (Rice), this protein is Ent-kaur-16-ene synthase, chloroplastic (KS1).